We begin with the raw amino-acid sequence, 230 residues long: Protein UPS2, mitochondrial (230 aa).

The PRELI/MSF1 domain occupies 1 to 175 (MKLFQNSYDF…VLQVFSENWE (175 aa)).

This sequence belongs to the slowmo family. Interacts with MDM35.

Its subcellular location is the mitochondrion inner membrane. The protein localises to the mitochondrion intermembrane space. Its function is as follows. Required for mitochondrial cristae morphogenesis and MGM1-processing. Controls the stability of mitochondrial phosphatidylethanolamine (PE). With UPS1, controls the level of cardiolipin in mitochondria. Cardiolipin is a unique phospholipid with four fatty acid chains and is present mainly in the mitochondrial inner membrane where it stabilizes the electron transport chain supercomplex between complexes III and IV through direct interaction of their subunits. The chain is Protein UPS2, mitochondrial (UPS2) from Saccharomyces cerevisiae (strain ATCC 204508 / S288c) (Baker's yeast).